A 124-amino-acid chain; its full sequence is Small ribosomal subunit protein uS12c (124 aa).

It belongs to the universal ribosomal protein uS12 family. In terms of assembly, part of the 30S ribosomal subunit.

Its subcellular location is the plastid. Functionally, with S4 and S5 plays an important role in translational accuracy. Located at the interface of the 30S and 50S subunits. In Helicosporidium sp. subsp. Simulium jonesii (Green alga), this protein is Small ribosomal subunit protein uS12c (rps12).